Here is a 1008-residue protein sequence, read N- to C-terminus: Probable transport protein MmpL10 (1008 aa).

The next 12 membrane-spanning stretches (helical) occupy residues 23–43, 202–222, 225–245, 257–277, 301–321, 340–360, 389–409, 835–855, 862–882, 895–915, 940–960, and 961–981; these read WPWV…MTVP, IELV…RNPI, LLPL…VSGV, MIVL…VFLI, ALIS…ITFL, IGIA…LVLA, VAYL…ASLV, DLQL…MALL, IYLV…CVLV, VPGL…MLLA, VITA…LSSI, and ATVV…TFIV.

The protein belongs to the resistance-nodulation-cell division (RND) (TC 2.A.6) family. MmpL subfamily.

It localises to the cell membrane. This chain is Probable transport protein MmpL10 (mmpL10), found in Mycobacterium leprae (strain TN).